A 433-amino-acid polypeptide reads, in one-letter code: Inositol hexakisphosphate kinase 1 (433 aa).

The segment at 100-160 (ETVEQDDTPE…SPKVELHSHS (61 aa)) is disordered. Over residues 113–123 (PRRKHSRRSLH) the composition is skewed to basic residues. Over residues 139-149 (SFETSESSQET) the composition is skewed to polar residues. The segment covering 150-160 (KSPKVELHSHS) has biased composition (basic and acidic residues). Phosphoserine is present on S151. 220–228 (PCVLDLKMG) contacts substrate. The segment at 362–383 (PLCGPSTSPSNTSLEAGPSSPP) is disordered. Polar residues predominate over residues 366–375 (PSTSPSNTSL).

The protein belongs to the inositol phosphokinase (IPK) family.

Its subcellular location is the cytoplasm. The protein localises to the nucleus. The enzyme catalyses 1D-myo-inositol hexakisphosphate + ATP = 5-diphospho-1D-myo-inositol 1,2,3,4,6-pentakisphosphate + ADP. The catalysed reaction is 1-diphospho-1D-myo-inositol 2,3,4,5,6-pentakisphosphate + ATP + H(+) = 1,5-bis(diphospho)-1D-myo-inositol 2,3,4,6-tetrakisphosphate + ADP. In terms of biological role, converts inositol hexakisphosphate (InsP6) to diphosphoinositol pentakisphosphate (InsP7/PP-InsP5). Converts 1,3,4,5,6-pentakisphosphate (InsP5) to PP-InsP4. In Rattus norvegicus (Rat), this protein is Inositol hexakisphosphate kinase 1 (Ip6k1).